Here is a 491-residue protein sequence, read N- to C-terminus: Cholesterol 22-monohydroxylase CYP90B51 (491 aa).

The chain crosses the membrane as a helical span at residues 6–26 (ITFYCLSSILSVLLIFIFILI). C437 is a heme binding site.

Belongs to the cytochrome P450 family. As to expression, mainly expressed in leaves and seed pods and, to a lower extent, in flowers and stems.

Its subcellular location is the membrane. The catalysed reaction is cholesterol + reduced [NADPH--hemoprotein reductase] + O2 = (22S)-22-hydroxycholesterol + oxidized [NADPH--hemoprotein reductase] + H2O + H(+). It participates in steroid metabolism; cholesterol metabolism. Canonical brassinosteroid (BR)-biosynthetic enzyme capable of converting cholesterol to 22S-hydroxycholesterol via sterol-C22 hydroxylation. The sequence is that of Cholesterol 22-monohydroxylase CYP90B51 from Trigonella foenum-graecum (Fenugreek).